A 218-amino-acid chain; its full sequence is Zinc metalloproteinase-disintegrin-like bothrojarin-2 (218 aa).

One can recognise a Disintegrin domain in the interval 14 to 100 (PPVCGNELLE…QCPTDDFHKN (87 aa)). Ca(2+) is bound by residues V16, L21, E23, E26, and D29. 10 cysteine pairs are disulfide-bonded: C28/C46, C30/C41, C40/C63, C54/C60, C59/C85, C72/C92, C79/C111, C104/C116, C123/C173, and C151/C161. The D/ECD-tripeptide motif lies at 78–80 (ECD).

This sequence belongs to the venom metalloproteinase (M12B) family. P-III subfamily. P-IIIa sub-subfamily. Monomer. The cofactor is Zn(2+). Post-translationally, glycosylated. Expressed by the venom gland.

Its subcellular location is the secreted. In terms of biological role, the hemorrhagic metalloproteinase-disintegrin-like bothrojarin-1 is a potent inhibitor of collagen-induced platelet aggregation by blockage of alpha-2/beta-1 (ITGA2/ITGB1) integrin. It does not present any fibrinogen-clotting activity. This Bothrops jararaca (Jararaca) protein is Zinc metalloproteinase-disintegrin-like bothrojarin-2.